The sequence spans 416 residues: Serine hydroxymethyltransferase (416 aa).

(6S)-5,6,7,8-tetrahydrofolate-binding positions include Leu119 and 123-125 (GHL). At Lys228 the chain carries N6-(pyridoxal phosphate)lysine.

Belongs to the SHMT family. In terms of assembly, homodimer. Requires pyridoxal 5'-phosphate as cofactor.

The protein localises to the cytoplasm. It catalyses the reaction (6R)-5,10-methylene-5,6,7,8-tetrahydrofolate + glycine + H2O = (6S)-5,6,7,8-tetrahydrofolate + L-serine. It participates in one-carbon metabolism; tetrahydrofolate interconversion. It functions in the pathway amino-acid biosynthesis; glycine biosynthesis; glycine from L-serine: step 1/1. In terms of biological role, catalyzes the reversible interconversion of serine and glycine with tetrahydrofolate (THF) serving as the one-carbon carrier. This reaction serves as the major source of one-carbon groups required for the biosynthesis of purines, thymidylate, methionine, and other important biomolecules. Also exhibits THF-independent aldolase activity toward beta-hydroxyamino acids, producing glycine and aldehydes, via a retro-aldol mechanism. The chain is Serine hydroxymethyltransferase from Moorella thermoacetica (strain ATCC 39073 / JCM 9320).